We begin with the raw amino-acid sequence, 63 residues long: Prokaryotic ubiquitin-like protein Pup (63 aa).

Residues 1–28 (MSDRQTQIPAGGGREDDHDDQVQSAGQV) are disordered. An ARC ATPase binding region spans residues 19-57 (DDQVQSAGQVQVNTEGVDDLLDEIDGLLENNAEEFVRSY). Glutamate 63 is covalently cross-linked (Isoglutamyl lysine isopeptide (Glu-Lys) (interchain with K-? in acceptor proteins)).

It belongs to the prokaryotic ubiquitin-like protein family. As to quaternary structure, strongly interacts with the proteasome-associated ATPase ARC through a hydrophobic interface; the interacting region of Pup lies in its C-terminal half. There is one Pup binding site per ARC hexamer ring.

It participates in protein degradation; proteasomal Pup-dependent pathway. Functionally, protein modifier that is covalently attached to lysine residues of substrate proteins, thereby targeting them for proteasomal degradation. The tagging system is termed pupylation. The protein is Prokaryotic ubiquitin-like protein Pup of Corynebacterium efficiens (strain DSM 44549 / YS-314 / AJ 12310 / JCM 11189 / NBRC 100395).